A 610-amino-acid polypeptide reads, in one-letter code: Isocitrate dehydrogenase kinase/phosphatase (610 aa).

Residues 359-365 (APGFKGT) and lysine 380 contribute to the ATP site. The active site involves aspartate 419.

It belongs to the AceK family.

The protein localises to the cytoplasm. It catalyses the reaction L-seryl-[isocitrate dehydrogenase] + ATP = O-phospho-L-seryl-[isocitrate dehydrogenase] + ADP + H(+). Its function is as follows. Bifunctional enzyme which can phosphorylate or dephosphorylate isocitrate dehydrogenase (IDH) on a specific serine residue. This is a regulatory mechanism which enables bacteria to bypass the Krebs cycle via the glyoxylate shunt in response to the source of carbon. When bacteria are grown on glucose, IDH is fully active and unphosphorylated, but when grown on acetate or ethanol, the activity of IDH declines drastically concomitant with its phosphorylation. In Rhodopseudomonas palustris (strain ATCC BAA-98 / CGA009), this protein is Isocitrate dehydrogenase kinase/phosphatase.